Reading from the N-terminus, the 540-residue chain is Cytochrome bc1 complex cytochrome b subunit (540 aa).

Residues 40 to 60 (EIALYSFIILLLTGVYLTLFF) traverse the membrane as a helical segment. The heme site is built by His-105 and His-119. The next 3 membrane-spanning stretches (helical) occupy residues 109 to 129 (ALTF…TGAF), 137 to 157 (WIIG…GYSL), and 169 to 189 (IMSA…WLIF). His-206 and His-221 together coordinate heme. 5 helical membrane-spanning segments follow: residues 207–227 (VLII…LVWY), 259–279 (FGLV…INAI), 325–345 (AFWV…YPFI), 371–391 (LGVM…NDLF), and 408–428 (IGLI…CLGL).

This sequence belongs to the cytochrome b family. The cytochrome bc1 complex is composed of a cytochrome b (QcrB), the Rieske protein iron-sulfur (QcrA) and a diheme cytochrome c (QcrC) subunit. Heme serves as cofactor.

The protein resides in the cell membrane. It carries out the reaction a quinol + 2 Fe(III)-[cytochrome c](out) = a quinone + 2 Fe(II)-[cytochrome c](out) + 2 H(+)(out). Cytochrome b subunit of the cytochrome bc1 complex, an essential component of the respiratory electron transport chain required for ATP synthesis. The bc1 complex catalyzes the oxidation of menaquinol and the reduction of cytochrome c in the respiratory chain. The bc1 complex operates through a Q-cycle mechanism that couples electron transfer to generation of the proton gradient that drives ATP synthesis. The polypeptide is Cytochrome bc1 complex cytochrome b subunit (qcrB) (Corynebacterium diphtheriae (strain ATCC 700971 / NCTC 13129 / Biotype gravis)).